A 175-amino-acid polypeptide reads, in one-letter code: Ribulose bisphosphate carboxylase small subunit, chloroplastic 2 (175 aa).

A chloroplast-targeting transit peptide spans 1–46; sequence MAPAVMASSATTVAPFQGLKSTAGLPISCRSGSTGLSSVSNGGRIR.

It belongs to the RuBisCO small chain family. In terms of assembly, heterohexadecamer of 8 large and 8 small subunits.

The protein localises to the plastid. Its subcellular location is the chloroplast. Functionally, ruBisCO catalyzes two reactions: the carboxylation of D-ribulose 1,5-bisphosphate, the primary event in carbon dioxide fixation, as well as the oxidative fragmentation of the pentose substrate. Both reactions occur simultaneously and in competition at the same active site. Although the small subunit is not catalytic it is essential for maximal activity. The polypeptide is Ribulose bisphosphate carboxylase small subunit, chloroplastic 2 (Triticum aestivum (Wheat)).